A 210-amino-acid polypeptide reads, in one-letter code: MAFHYPNGQPYSNHETKQPKKQGRHTSPTTLYGKRGMSLEEEINDSNQYYRLRDAAVIYKKPTPIQIVKVDYPARSQAVIKEAYFKQASTTDYNGIYQGHYVDFEAKETKNKTSFPFQNFHQHQIDHFRACLQQGGVCFVIMKFVPLQRLFVYPASLLITQWDNQATGGRKSIPLAAIVADGFEIQYQLNPSIPYLEAVDQLIARHHKGV.

A disordered region spans residues Met-1–Lys-34. Mg(2+) is bound by residues Thr-90, Asp-92, Glu-105, and Gln-124.

This sequence belongs to the RecU family. Requires Mg(2+) as cofactor.

Its subcellular location is the cytoplasm. It carries out the reaction Endonucleolytic cleavage at a junction such as a reciprocal single-stranded crossover between two homologous DNA duplexes (Holliday junction).. In terms of biological role, endonuclease that resolves Holliday junction intermediates in genetic recombination. Cleaves mobile four-strand junctions by introducing symmetrical nicks in paired strands. Promotes annealing of linear ssDNA with homologous dsDNA. Required for DNA repair, homologous recombination and chromosome segregation. The protein is Holliday junction resolvase RecU of Latilactobacillus sakei subsp. sakei (strain 23K) (Lactobacillus sakei subsp. sakei).